The primary structure comprises 489 residues: Probable apyrase 1 (489 aa).

The Cytoplasmic portion of the chain corresponds to 1 to 28 (MRRFSAAAGARQQQQQGEAVSDRVLRFR). A helical; Signal-anchor for type II membrane protein membrane pass occupies residues 29 to 49 (GVLVVVLAPVLLISLVLLLMP). Over 50-489 (RAPASATVEG…GSAIEVASSS (440 aa)) the chain is Extracellular. An ATP-binding site is contributed by 89–99 (VIFDAGSSGSR). Catalysis depends on glutamate 211, which acts as the Proton acceptor. Residue 235 to 245 (GVVDLGGGSVQ) participates in ATP binding.

The protein belongs to the GDA1/CD39 NTPase family. Ca(2+) serves as cofactor.

Its subcellular location is the membrane. The catalysed reaction is a ribonucleoside 5'-triphosphate + 2 H2O = a ribonucleoside 5'-phosphate + 2 phosphate + 2 H(+). Its function is as follows. Catalyzes the hydrolysis of phosphoanhydride bonds of nucleoside tri- and di-phosphates. The polypeptide is Probable apyrase 1 (APY1) (Oryza sativa subsp. japonica (Rice)).